The sequence spans 821 residues: Fibroblast growth factor receptor 2 (821 aa).

An N-terminal signal peptide occupies residues 1–21 (MVSWGRFICLVLVTMATLSLA). Over 22–377 (RPSFSLVEDT…EITASPDYLE (356 aa)) the chain is Extracellular. The region spanning 25–125 (FSLVEDTTLE…ETWIFMVNVT (101 aa)) is the Ig-like C2-type 1 domain. Cys-62 and Cys-107 are joined by a disulfide. 2 N-linked (GlcNAc...) asparagine glycosylation sites follow: Asn-83 and Asn-123. Residues 129 to 151 (SSGDDEDDTDSSEDVVSENRSNQ) form a disordered region. A compositionally biased stretch (acidic residues) spans 131–144 (GDDEDDTDSSEDVV). The N-linked (GlcNAc...) asparagine glycan is linked to Asn-147. Ig-like C2-type domains are found at residues 154-247 (PYWT…YHLD) and 256-358 (PILQ…AWLT). The segment at 161-178 (KMEKRLHACPAANTVKFR) is heparin-binding. Residues Cys-179 and Cys-231 are joined by a disulfide bond. N-linked (GlcNAc...) asparagine glycans are attached at residues Asn-228, Asn-241, Asn-265, Asn-297, Asn-318, and Asn-331. The cysteines at positions 278 and 342 are disulfide-linked. The helical transmembrane segment at 378 to 398 (IAIYCIGVFLIACMVVTVIFC) threads the bilayer. The Cytoplasmic segment spans residues 399–821 (RMKTTTKKPD…YPHINGSVKT (423 aa)). Residue Tyr-466 is modified to Phosphotyrosine; by autocatalysis. One can recognise a Protein kinase domain in the interval 481 to 770 (LTLGKPLGEG…LTLTTNEEYL (290 aa)). ATP-binding positions include 487 to 495 (LGEGCFGQV), Lys-517, 565 to 567 (EYA), and Asn-571. Phosphotyrosine; by autocatalysis is present on residues Tyr-586 and Tyr-588. Residue Asp-626 is the Proton acceptor of the active site. 3 positions are modified to phosphotyrosine; by autocatalysis: Tyr-656, Tyr-657, and Tyr-769. Ser-780 carries the phosphoserine modification.

The protein belongs to the protein kinase superfamily. Tyr protein kinase family. Fibroblast growth factor receptor subfamily. Monomer. Homodimer after ligand binding. Interacts predominantly with FGF1 and FGF2, but can also interact with FGF3, FGF4, FGF6, FGF7, FGF8, FGF9, FGF10, FGF17, FGF18 and FGF22 (in vitro). Ligand specificity is determined by tissue-specific expression of isoforms, and differences in the third Ig-like domain are crucial for ligand specificity. Affinity for fibroblast growth factors (FGFs) is increased by heparan sulfate glycosaminoglycans that function as coreceptors. Likewise, KLB increases the affinity for FGF19 and FGF21. Interacts with PLCG1. Interacts with GRB2 and PAK4. Interacts with FLRT2. Post-translationally, autophosphorylated. Binding of FGF family members together with heparan sulfate proteoglycan or heparin promotes receptor dimerization and autophosphorylation on tyrosine residues. Autophosphorylation occurs in trans between the two FGFR molecules present in the dimer. N-glycosylated in the endoplasmic reticulum. The N-glycan chains undergo further maturation to an Endo H-resistant form in the Golgi apparatus. In terms of processing, ubiquitinated. FGFR2 is rapidly ubiquitinated after autophosphorylation, leading to internalization and degradation. Subject to degradation both in lysosomes and by the proteasome.

It localises to the cell membrane. The protein localises to the golgi apparatus. It is found in the cytoplasmic vesicle. It carries out the reaction L-tyrosyl-[protein] + ATP = O-phospho-L-tyrosyl-[protein] + ADP + H(+). With respect to regulation, present in an inactive conformation in the absence of bound ligand. Ligand binding leads to dimerization and activation by autophosphorylation on tyrosine residues. Its function is as follows. Tyrosine-protein kinase that acts as a cell-surface receptor for fibroblast growth factors and plays an essential role in the regulation of cell proliferation, differentiation, migration and apoptosis, and in the regulation of embryonic development. Required for normal embryonic patterning, trophoblast function, limb bud development, lung morphogenesis, osteogenesis and skin development. Plays an essential role in the regulation of osteoblast differentiation, proliferation and apoptosis, and is required for normal skeleton development. Promotes cell proliferation in keratinocytes and immature osteoblasts, but promotes apoptosis in differentiated osteoblasts. Phosphorylates PLCG1, FRS2 and PAK4. Ligand binding leads to the activation of several signaling cascades. Activation of PLCG1 leads to the production of the cellular signaling molecules diacylglycerol and inositol 1,4,5-trisphosphate. Phosphorylation of FRS2 triggers recruitment of GRB2, GAB1, PIK3R1 and SOS1, and mediates activation of RAS, MAPK1/ERK2, MAPK3/ERK1 and the MAP kinase signaling pathway, as well as of the AKT1 signaling pathway. FGFR2 signaling is down-regulated by ubiquitination, internalization and degradation. Mutations that lead to constitutive kinase activation or impair normal FGFR2 maturation, internalization and degradation lead to aberrant signaling. Over-expressed FGFR2 promotes activation of STAT1. The protein is Fibroblast growth factor receptor 2 (Fgfr2) of Mus musculus (Mouse).